Consider the following 256-residue polypeptide: uncharacterized protein (256 aa).

A signal peptide spans 1–24 (MIKRVNKLVLGISLLFLVISITAG). The N-palmitoyl cysteine moiety is linked to residue C25. A lipid anchor (S-diacylglycerol cysteine) is attached at C25.

This sequence belongs to the staphylococcal tandem lipoprotein family.

It localises to the cell membrane. This is an uncharacterized protein from Staphylococcus aureus.